We begin with the raw amino-acid sequence, 236 residues long: Endo-1,4-beta-xylanase 3 (236 aa).

The first 45 residues, 1–45 (MQILTWALAALAAIPAVTAAPVETVEASSMDELVERSPNVTLVAR), serve as a signal peptide directing secretion. N-linked (GlcNAc...) asparagine glycosylation is found at Asn39 and Asn106. The 191-residue stretch at 46 to 236 (GTPSSTGTHN…SSGSASMTVR (191 aa)) folds into the GH11 domain. Glu131 acts as the Nucleophile in catalysis. Residue Glu223 is the Proton donor of the active site.

This sequence belongs to the glycosyl hydrolase 11 (cellulase G) family.

It is found in the secreted. It catalyses the reaction Endohydrolysis of (1-&gt;4)-beta-D-xylosidic linkages in xylans.. It participates in glycan degradation; xylan degradation. Functionally, endo-1,4-beta-xylanase involved in the hydrolysis of xylan, a major structural heterogeneous polysaccharide found in plant biomass representing the second most abundant polysaccharide in the biosphere, after cellulose. The polypeptide is Endo-1,4-beta-xylanase 3 (XYL3) (Pyricularia grisea (Crabgrass-specific blast fungus)).